The primary structure comprises 428 residues: Probable anion transporter 6 (428 aa).

Positions 1–22 are cleaved as a signal peptide; it reads MKFPKRYAIVLLTFMCTNVCYI. A run of 11 helical transmembrane segments spans residues 47-67, 74-94, 98-118, 137-157, 164-184, 221-241, 269-289, 301-321, 327-347, 356-376, and 401-421; these read MILS…GWAA, LVLL…PLDP, ILLV…FPSI, LTTS…PSLV, SVFS…FKFA, ILFS…HYAL, LPYL…DHLI, KLLN…LPLF, AIFC…GFAV, FAGI…IVGV, and TVFF…LIFS.

It belongs to the major facilitator superfamily. Sodium/anion cotransporter (TC 2.A.1.14) family.

Its subcellular location is the cell membrane. Probable anion transporter. The sequence is that of Probable anion transporter 6 (PHT4;6) from Oryza sativa subsp. japonica (Rice).